The sequence spans 127 residues: Dual endothelin-1/VEGF signal peptide receptor (127 aa).

The Extracellular segment spans residues 1 to 69; it reads MSTFYVTAVP…EMKSRWNWGS (69 aa). The helical transmembrane segment at 70 to 88 threads the bilayer; it reads ITCIMCFTCVGSQLSMSSS. The Cytoplasmic portion of the chain corresponds to 89-127; the sequence is KASNFSGPLQLYQRGIGHITNPYRRPPAPAWPCSSSGTT.

In terms of tissue distribution, prominently expressed in brain and heart tissues. Weakly expressed in aorta, adrenal gland, and lung tissues.

It localises to the cell membrane. Its function is as follows. In the Dahl salt-resistant strain, acts as a dual receptor for both endothelin-1 and the signal sequence of vascular endothelial growth factor A and does not act as a receptor for angiotensin-2. Does not bind the VEGFA mature protein. In the Dahl salt-sensitive strain, acts as a dual endothelin-1/angiotensin-2 receptor that is functionally coupled to a calcium-mobilizing transduction system, responding equivalently to both endothelin-1/EDN1 and angiotensin-2 peptides in a highly specific manner. May play a role in angiogenesis with a significant role in cardiovascular and neural development. This is Dual endothelin-1/VEGF signal peptide receptor from Rattus norvegicus (Rat).